The following is a 552-amino-acid chain: Putative transport protein NT01EI_3867 (552 aa).

5 helical membrane passes run 4–24, 26–46, 65–85, 90–112, and 158–178; these read IALT…IGNW, IYGV…VGHF, FGLI…FFSS, GLRL…AAIH, and MGYA…IWLI. 2 consecutive RCK C-terminal domains span residues 191–276 and 279–361; these read RDFD…VIGE and DTSL…IVGN. The next 6 membrane-spanning stretches (helical) occupy residues 371–391, 403–425, 439–459, 464–484, 493–513, and 530–550; these read MLPV…PLFI, AGGP…LYWF, IVLF…DTLL, VTWI…AALL, YLTL…LAFA, and VYPL…LLFW.

It belongs to the AAE transporter (TC 2.A.81) family. YidE subfamily.

The protein localises to the cell membrane. This is Putative transport protein NT01EI_3867 from Edwardsiella ictaluri (strain 93-146).